The chain runs to 336 residues: Protein SGT1 homolog (336 aa).

Position 2 is an N-acetylalanine (alanine 2). TPR repeat units lie at residues 11 to 44 (SQRL…NPDD), 45 to 78 (AQYY…NPNN), and 79 to 112 (CTAL…DSTD). A CS domain is found at 140–229 (QSKIKYDWYQ…PEAVRWEKLE (90 aa)). Threonine 236 carries the phosphothreonine modification. The region spanning 247–336 (MYPSSSHYTR…PPDDMEWKQY (90 aa)) is the SGS domain. Residue serine 252 is modified to Phosphoserine. At threonine 255 the chain carries Phosphothreonine. A Glycyl lysine isopeptide (Lys-Gly) (interchain with G-Cter in SUMO1); alternate cross-link involves residue lysine 266. Residue lysine 266 forms a Glycyl lysine isopeptide (Lys-Gly) (interchain with G-Cter in SUMO2); alternate linkage. At serine 302 the chain carries Phosphoserine.

Belongs to the SGT1 family. In terms of assembly, probably associates with SCF (SKP1-CUL1-F-box protein) complex through interaction with SKP1. Interacts with S100A6. Interacts with HSP90. In terms of processing, phosphorylated at Ser-252 and Ser-302, dephosphorylation promotes nuclear translocation, most likely due to disruption of the SUGT1-HSP90 complex.

The protein resides in the cytoplasm. It is found in the nucleus. May play a role in ubiquitination and subsequent proteasomal degradation of target proteins. In Mus musculus (Mouse), this protein is Protein SGT1 homolog.